We begin with the raw amino-acid sequence, 179 residues long: Large ribosomal subunit protein uL5 (179 aa).

This sequence belongs to the universal ribosomal protein uL5 family. Part of the 50S ribosomal subunit; part of the 5S rRNA/L5/L18/L25 subcomplex. Contacts the 5S rRNA and the P site tRNA. Forms a bridge to the 30S subunit in the 70S ribosome.

Its function is as follows. This is one of the proteins that bind and probably mediate the attachment of the 5S RNA into the large ribosomal subunit, where it forms part of the central protuberance. In the 70S ribosome it contacts protein S13 of the 30S subunit (bridge B1b), connecting the 2 subunits; this bridge is implicated in subunit movement. Contacts the P site tRNA; the 5S rRNA and some of its associated proteins might help stabilize positioning of ribosome-bound tRNAs. This Syntrophus aciditrophicus (strain SB) protein is Large ribosomal subunit protein uL5.